A 618-amino-acid polypeptide reads, in one-letter code: Glucose starvation modulator protein 1 (618 aa).

A DNA-binding region (zn(2)-C6 fungal-type) is located at residues Cys20 to Cys48. The interval Ala325–Glu352 is disordered. The segment covering Ala335–Glu352 has biased composition (basic and acidic residues). In terms of domain architecture, PAS spans Leu466–Gly538.

The protein belongs to the ERT1/acuK family.

The protein resides in the nucleus. Transcription factor which regulates nonfermentable carbon utilization. Binds specifically to 5'-CGGN(8)CGG-3' and 5'-CGGN(9)CGG-3' sequences in the promoter region. This is Glucose starvation modulator protein 1 (GSM1) from Saccharomyces cerevisiae (strain RM11-1a) (Baker's yeast).